The chain runs to 184 residues: Autophagy-related protein 101 (184 aa).

This sequence belongs to the ATG101 family. In terms of assembly, component of the atg1 kinase complex composed of at least atg1, atg13, atg17 and atg101. Interacts directly with atg13.

Its subcellular location is the cytoplasm. It localises to the nucleus. The protein localises to the preautophagosomal structure membrane. Functionally, autophagy factor required for autophagosome formation. Component of the atg1 kinase complex in which it stabilizes atg13. Is also responsible for recruiting downstream factors to the autophagosome-formation site. Has a role in meiosis and sporulation. The sequence is that of Autophagy-related protein 101 from Schizosaccharomyces pombe (strain 972 / ATCC 24843) (Fission yeast).